The sequence spans 505 residues: RNA-splicing ligase RtcB homolog (505 aa).

4 residues coordinate Mn(2+): Asp119, Cys122, His227, and His259. 226-230 (NHYAE) serves as a coordination point for GMP. Ser300 carries the post-translational modification Phosphoserine. Position 353 (His353) interacts with Mn(2+). Residues 353-354 (HN), 402-405 (GGTM), Ser409, and 428-431 (HGAG) each bind GMP. The active-site GMP-histidine intermediate is His428. Residue Lys496 forms a Glycyl lysine isopeptide (Lys-Gly) (interchain with G-Cter in SUMO2) linkage. A GMP-binding site is contributed by Lys504.

Belongs to the RtcB family. As to quaternary structure, catalytic component of the tRNA-splicing ligase complex. Requires Mn(2+) as cofactor.

Its subcellular location is the nucleus. It is found in the cytoplasm. It catalyses the reaction a 3'-end 3'-phospho-ribonucleotide-RNA + a 5'-end dephospho-ribonucleoside-RNA + GTP = a ribonucleotidyl-ribonucleotide-RNA + GMP + diphosphate. It carries out the reaction a 3'-end 2',3'-cyclophospho-ribonucleotide-RNA + a 5'-end dephospho-ribonucleoside-RNA + GTP + H2O = a ribonucleotidyl-ribonucleotide-RNA + GMP + diphosphate + H(+). Its function is as follows. Catalytic subunit of the tRNA-splicing ligase complex that acts by directly joining spliced tRNA halves to mature-sized tRNAs by incorporating the precursor-derived splice junction phosphate into the mature tRNA as a canonical 3',5'-phosphodiester. May act as an RNA ligase with broad substrate specificity, and may function toward other RNAs. This Rattus norvegicus (Rat) protein is RNA-splicing ligase RtcB homolog.